Here is a 449-residue protein sequence, read N- to C-terminus: MPGDVEGCQHLKLKPADVENYQKICTQIFSCHFVPRRCSTCKRINKRSIRCLSCHSVGCLWGHHGEEHAMEHTHMIGVDVKNGHTYCFGCQDYVYQTELETLRFKIKNIKAWQSDHKRLPEKYNQMVCLEAYRKYPPVCATAGLRGIQNLGATCFMSVILQSILHNPLVRNLFFSGFHTSTDCKRPTCMTCAIDDMFSSIYNSKNKSTFYGPTAVLNLMWKLSKSLCGYSQQDGHEFFVYLLDQMHTESGGGTSMPCTCPIHRIFSGSLKNVVTCLDCKKERVAVDPLMDISLDINEPTLQGCLERFVSKEKVQYSCHSCGSKNAIKQLVFDKLPPTICMQLKRFEQNNFAMSTKIDKQVSYPAFLRMRYNFNQDDVDYQLYSVVCHKGTLDTGHYIAYTYYQNQWFLLDDTTIVEVKESEVLNSQAYLLFYHERQILYSDEMTVKTEN.

The UBP-type zinc finger occupies 6 to 113 (EGCQHLKLKP…FKIKNIKAWQ (108 aa)). Residues Cys-8, His-10, Cys-38, Cys-41, Cys-51, Cys-54, Cys-59, His-64, His-68, His-74, Cys-87, and Cys-90 each contribute to the Zn(2+) site. In terms of domain architecture, USP spans 145–435 (RGIQNLGATC…QAYLLFYHER (291 aa)). Cys-154 serves as the catalytic Nucleophile. His-178, Cys-183, Cys-188, Cys-191, His-246, Cys-257, Cys-259, His-262, Cys-275, Cys-278, Cys-317, and Cys-320 together coordinate Zn(2+). The Proton acceptor role is filled by His-395.

The protein belongs to the peptidase C19 family. UBP8 subfamily. In terms of assembly, component of the 1.8 MDa SAGA (Spt-Ada-Gcn5 acetyltransferase) complex, which is composed of 19 subunits tra1, spt7, taf5, ngg1/ada3, sgf73, spt20, spt8, taf12, taf6, hfi1/ada1, ubp8, gcn5, ada2, spt3, sgf29, taf10, taf9, sgf11 and sus1. The SAGA complex is composed of 4 modules, namely the HAT (histone acetyltransferase) module (gcn5, ada2, ngg1/ada3 and sgf29), the DUB (deubiquitinating) module (ubp8, sgf11, sgf73 and sus1), the core or TAF (TBP-associated factor) module (taf5, taf6, taf9, taf10 and taf12), and the Tra1 or SPT (Suppressor of Ty) module (tra1, hfi1/ada1, spt3, spt7, spt8 and spt20). The Tra1/SPT module binds activators, the core module recruits TBP (TATA-binding protein), the HAT module contains the histone H3 acetyltransferase gcn5, and the DUB module comprises the histone H2B deubiquitinase ubp8.

The protein resides in the nucleus. It localises to the nucleoplasm. It carries out the reaction Thiol-dependent hydrolysis of ester, thioester, amide, peptide and isopeptide bonds formed by the C-terminal Gly of ubiquitin (a 76-residue protein attached to proteins as an intracellular targeting signal).. Functionally, histone deubiquitinating enzyme component of the transcription coactivator SAGA complex. SAGA acts as a general cofactor required for essentially all RNA polymerase II transcription. At the promoters, SAGA is required for transcription pre-initiation complex (PIC) recruitment. It influences RNA polymerase II transcriptional activity through different activities such as TBP interaction (via core/TAF module) and promoter selectivity, interaction with transcription activators (via Tra1/SPT module), and chromatin modification through histone acetylation (via HAT module) and deubiquitination (via DUB module). SAGA preferentially acetylates histones H3 (to form H3K9ac, H3K14ac, H3K18ac and H3K23ac) and H2B and deubiquitinates histone H2B. SAGA interacts with DNA via upstream activating sequences (UASs). Within the DUB module, the correctly positioned zinc finger domains of sgf11 and sgf73 are both required to fully activate the ubiquitin hydrolase ubp8. The DUB module is also linked to the splicing efficiency of many transcripts. The chain is Probable ubiquitin carboxyl-terminal hydrolase 8 (ubp8) from Schizosaccharomyces pombe (strain 972 / ATCC 24843) (Fission yeast).